Reading from the N-terminus, the 613-residue chain is tRNA 5-methylaminomethyl-2-thiouridine biosynthesis bifunctional protein MnmC (613 aa).

A tRNA (mnm(5)s(2)U34)-methyltransferase region spans residues 1-225 (MKKAKLIFKD…KREMIKAYLE (225 aa)). The interval 252-613 (IGAGISSAVL…FLIRKLKKGL (362 aa)) is FAD-dependent cmnm(5)s(2)U34 oxidoreductase.

This sequence in the N-terminal section; belongs to the methyltransferase superfamily. tRNA (mnm(5)s(2)U34)-methyltransferase family. In the C-terminal section; belongs to the DAO family. The cofactor is FAD.

It localises to the cytoplasm. It catalyses the reaction 5-aminomethyl-2-thiouridine(34) in tRNA + S-adenosyl-L-methionine = 5-methylaminomethyl-2-thiouridine(34) in tRNA + S-adenosyl-L-homocysteine + H(+). In terms of biological role, catalyzes the last two steps in the biosynthesis of 5-methylaminomethyl-2-thiouridine (mnm(5)s(2)U) at the wobble position (U34) in tRNA. Catalyzes the FAD-dependent demodification of cmnm(5)s(2)U34 to nm(5)s(2)U34, followed by the transfer of a methyl group from S-adenosyl-L-methionine to nm(5)s(2)U34, to form mnm(5)s(2)U34. In Campylobacter jejuni subsp. jejuni serotype O:6 (strain 81116 / NCTC 11828), this protein is tRNA 5-methylaminomethyl-2-thiouridine biosynthesis bifunctional protein MnmC.